An 895-amino-acid polypeptide reads, in one-letter code: Microsomal triglyceride transfer protein large subunit (895 aa).

The first 18 residues, Met1–Ser18, serve as a signal peptide directing secretion. Residues Leu28–Leu659 form the Vitellogenin domain. Cys174 and Cys194 form a disulfide bridge.

In terms of assembly, heterodimer; heterodimerizes with the protein disulfide isomerase (P4HB/PDI). Interacts with APOB. Interacts with PRAP1.

The protein localises to the endoplasmic reticulum. The protein resides in the golgi apparatus. It catalyses the reaction a 1,2-diacyl-sn-glycero-3-phosphocholine(in) = a 1,2-diacyl-sn-glycero-3-phosphocholine(out). The enzyme catalyses a 1,2-diacyl-sn-glycero-3-phosphoethanolamine(in) = a 1,2-diacyl-sn-glycero-3-phosphoethanolamine(out). It carries out the reaction a cholesterol ester(in) = a cholesterol ester(out). The catalysed reaction is a triacyl-sn-glycerol(in) = a triacyl-sn-glycerol(out). Catalyzes the transport of triglyceride, cholesteryl ester, and phospholipid between phospholipid surfaces. Required for the assembly and secretion of plasma lipoproteins that contain apolipoprotein B. May be involved in regulating cholesteryl ester biosynthesis in cells that produce lipoproteins. This Mesocricetus auratus (Golden hamster) protein is Microsomal triglyceride transfer protein large subunit (MTTP).